The following is a 152-amino-acid chain: Superoxide dismutase [Cu-Zn] (152 aa).

Cu cation-binding residues include His45, His47, and His62. An intrachain disulfide couples Cys56 to Cys145. Zn(2+)-binding residues include His62, His70, His79, and Asp82. His119 is a binding site for Cu cation.

Belongs to the Cu-Zn superoxide dismutase family. Homodimer. Requires Cu cation as cofactor. Zn(2+) serves as cofactor.

The protein resides in the cytoplasm. The enzyme catalyses 2 superoxide + 2 H(+) = H2O2 + O2. Destroys radicals which are normally produced within the cells and which are toxic to biological systems. This chain is Superoxide dismutase [Cu-Zn] (SODCC), found in Ipomoea batatas (Sweet potato).